A 454-amino-acid polypeptide reads, in one-letter code: Aquaporin-7 (454 aa).

Residues 1-71 are Cytoplasmic-facing; it reads MNINEPRDGG…LHLHNKTRNH (71 aa). The helical transmembrane segment at 72–92 threads the bilayer; the sequence is FVATVAEFAGTTLFLFFAFSG. Residues 93 to 115 are Extracellular-facing; sequence TQVALLATPANDSNVVGTPSNPA. N103 carries an N-linked (GlcNAc...) asparagine glycan. Residues 116–136 form a helical membrane-spanning segment; the sequence is QLLYVSLCFGFSLAVNAWVFF. The Cytoplasmic portion of the chain corresponds to 137 to 163; that stretch reads RISGGLFNPAVTMGMCIVGALPYFRGL. The NPA 1 motif lies at 144–146; sequence NPA. Residues 164–184 form a helical membrane-spanning segment; it reads LLIFAQIIGGIAAAAIVSALF. At 185–202 the chain is on the extracellular side; the sequence is PGPITFRTSLGGGTSIVQ. A helical transmembrane segment spans residues 203-223; it reads GLFIEMFLTAELVFTIFMLAA. Residues 224-229 lie on the Cytoplasmic side of the membrane; the sequence is EKHKGT. A helical transmembrane segment spans residues 230–250; sequence FIAPIGIGLSLFIAELTGVYF. The Extracellular portion of the chain corresponds to 251–274; sequence TGGSVNPARSFGPSVVSGQFTGYH. Residues 256-258 carry the NPA 2 motif; that stretch reads NPA. Residues 275–295 form a helical membrane-spanning segment; it reads WIYWVGPILGAILASAFYKFI. Residues 296-454 lie on the Cytoplasmic side of the membrane; that stretch reads KMLEYETANP…ENLRDNTHNN (159 aa). Residues 343–454 are disordered; sequence GASHVHENGN…ENLRDNTHNN (112 aa).

It belongs to the MIP/aquaporin (TC 1.A.8) family.

Its subcellular location is the membrane. It carries out the reaction H2O(in) = H2O(out). Functionally, water channel required to facilitate the transport of water across membranes. Involved in conidiation. This is Aquaporin-7 from Botryotinia fuckeliana (strain B05.10) (Noble rot fungus).